The chain runs to 122 residues: Large ribosomal subunit protein uL18 (122 aa).

It belongs to the universal ribosomal protein uL18 family. Part of the 50S ribosomal subunit; part of the 5S rRNA/L5/L18/L25 subcomplex. Contacts the 5S and 23S rRNAs.

Its function is as follows. This is one of the proteins that bind and probably mediate the attachment of the 5S RNA into the large ribosomal subunit, where it forms part of the central protuberance. The sequence is that of Large ribosomal subunit protein uL18 from Leptospira borgpetersenii serovar Hardjo-bovis (strain JB197).